A 681-amino-acid polypeptide reads, in one-letter code: Potassium-transporting ATPase ATP-binding subunit (681 aa).

4 helical membrane passes run 30-50 (LLVY…FFGI), 59-79 (LAIA…EAIA), 216-236 (ILLV…LPFT), and 255-275 (IALL…SIGI). Asp-306 (4-aspartylphosphate intermediate) is an active-site residue. Residues Asp-343, Glu-347, 376-383 (FTATTRMS), and Lys-394 contribute to the ATP site. Asp-517 and Asp-521 together coordinate Mg(2+). 3 helical membrane passes run 587 to 607 (FAII…LNLM), 615 to 635 (AILS…PLSL), and 661 to 681 (LIAP…LGIV).

This sequence belongs to the cation transport ATPase (P-type) (TC 3.A.3) family. Type IA subfamily. The system is composed of three essential subunits: KdpA, KdpB and KdpC.

The protein resides in the cell membrane. The enzyme catalyses K(+)(out) + ATP + H2O = K(+)(in) + ADP + phosphate + H(+). Part of the high-affinity ATP-driven potassium transport (or Kdp) system, which catalyzes the hydrolysis of ATP coupled with the electrogenic transport of potassium into the cytoplasm. This subunit is responsible for energy coupling to the transport system and for the release of the potassium ions to the cytoplasm. The sequence is that of Potassium-transporting ATPase ATP-binding subunit from Listeria monocytogenes serotype 4b (strain CLIP80459).